Consider the following 312-residue polypeptide: MALNLKGKSFLKLLDFSPREIRYLLDLSRDLKRAKYAGNEVQTMQGKNVVLLFQKNSTRTRCAFEVATLDQGAHVTYLGPSGSQFGKKESVADTAKVLGRMYDAIEFRGYEQSVVEDLAKYSGVPVYNGLTNEFHPTQILADFLTVEEYKGNLKGLKFVFAGDTRNNVATSLMVGCAKMGMHFVGAAPKELWPSEDLVNQSKEIAKETNATISFVEDMKQACSDADVIYTDVWVSMGEPAEVWESRINLLKPFQVNMDAIKVAKPDVIFMHCLPSFHDLNTEVGRQIYEKFGIPEMEVTNEVFESKHSVVFE.

Residues 57–60 (STRT), glutamine 84, arginine 108, and 135–138 (HPTQ) contribute to the carbamoyl phosphate site. L-ornithine contacts are provided by residues asparagine 167, aspartate 231, and 235–236 (SM). Carbamoyl phosphate is bound at residue 272 to 273 (CL).

It belongs to the aspartate/ornithine carbamoyltransferase superfamily. OTCase family.

It localises to the cytoplasm. The catalysed reaction is carbamoyl phosphate + L-ornithine = L-citrulline + phosphate + H(+). It participates in amino-acid degradation; L-arginine degradation via ADI pathway; carbamoyl phosphate from L-arginine: step 2/2. Functionally, reversibly catalyzes the transfer of the carbamoyl group from carbamoyl phosphate (CP) to the N(epsilon) atom of ornithine (ORN) to produce L-citrulline. This Mycoplasma capricolum subsp. capripneumoniae protein is Ornithine carbamoyltransferase, catabolic (arcB).